A 581-amino-acid chain; its full sequence is Probable CDP-diacylglycerol--glycerol-3-phosphate 3-phosphatidyltransferase (581 aa).

Residues 27-65 (RSATTTTTTTTKACGNGSSQSPPSTPLLSSKSSTITSNK) form a disordered region. Residues 44–65 (SSQSPPSTPLLSSKSSTITSNK) are compositionally biased toward low complexity. ATP is bound at residue 160 to 167 (ASLYLGTS). PLD phosphodiesterase domains lie at 248–274 (TIGVQHIKTYIFDDDLLLSGANLSKDY) and 487–520 (DKWTYHAKGLWIQVKNQQHPSITLIGSPNFGSRS). Residues H253, K255, and D260 contribute to the active site.

It belongs to the CDP-alcohol phosphatidyltransferase class-II family.

The catalysed reaction is a CDP-1,2-diacyl-sn-glycerol + sn-glycerol 3-phosphate = a 1,2-diacyl-sn-glycero-3-phospho-(1'-sn-glycero-3'-phosphate) + CMP + H(+). The protein operates within phospholipid metabolism; phosphatidylglycerol biosynthesis; phosphatidylglycerol from CDP-diacylglycerol: step 1/2. Functions in the biosynthesis of the anionic phospholipids phosphatidylglycerol and cardiolipin. In Dictyostelium discoideum (Social amoeba), this protein is Probable CDP-diacylglycerol--glycerol-3-phosphate 3-phosphatidyltransferase (pgs1).